Consider the following 259-residue polypeptide: 3-deoxy-manno-octulosonate cytidylyltransferase 1 (259 aa).

This sequence belongs to the KdsB family.

The protein resides in the cytoplasm. The enzyme catalyses 3-deoxy-alpha-D-manno-oct-2-ulosonate + CTP = CMP-3-deoxy-beta-D-manno-octulosonate + diphosphate. It functions in the pathway nucleotide-sugar biosynthesis; CMP-3-deoxy-D-manno-octulosonate biosynthesis; CMP-3-deoxy-D-manno-octulosonate from 3-deoxy-D-manno-octulosonate and CTP: step 1/1. Its pathway is bacterial outer membrane biogenesis; lipopolysaccharide biosynthesis. Functionally, activates KDO (a required 8-carbon sugar) for incorporation into bacterial lipopolysaccharide in Gram-negative bacteria. The sequence is that of 3-deoxy-manno-octulosonate cytidylyltransferase 1 from Hydrogenovibrio crunogenus (strain DSM 25203 / XCL-2) (Thiomicrospira crunogena).